The sequence spans 127 residues: MRYGEKEIKEFDVENMEVWPNDAKNDYVIKITLPEFMCCCPRSGYPDFATIYLEYIPNKLVVELKAIKLYINTFMYRNVSHEASINEIYNTLKEKLDPKWIKVVGDFNPRGNVHTVIECRSDLVVPQ.

Cys-40 serves as the catalytic Thioimide intermediate. Asp-47 acts as the Proton donor in catalysis. Substrate is bound by residues 62-64 and 81-82; these read VEL and HE.

Belongs to the GTP cyclohydrolase I family. QueF type 1 subfamily.

The protein resides in the cytoplasm. It carries out the reaction 7-aminomethyl-7-carbaguanine + 2 NADP(+) = 7-cyano-7-deazaguanine + 2 NADPH + 3 H(+). Its pathway is tRNA modification; tRNA-queuosine biosynthesis. Its function is as follows. Catalyzes the NADPH-dependent reduction of 7-cyano-7-deazaguanine (preQ0) to 7-aminomethyl-7-deazaguanine (preQ1). This is NADPH-dependent 7-cyano-7-deazaguanine reductase from Campylobacter lari (strain RM2100 / D67 / ATCC BAA-1060).